The chain runs to 82 residues: Putative membrane protein insertion efficiency factor (82 aa).

The protein belongs to the UPF0161 family.

Its subcellular location is the cell inner membrane. Its function is as follows. Could be involved in insertion of integral membrane proteins into the membrane. The sequence is that of Putative membrane protein insertion efficiency factor from Francisella tularensis subsp. novicida (strain U112).